The sequence spans 190 residues: LIM domain-containing protein WLIM1 (190 aa).

At alanine 2 the chain carries N-acetylalanine. The 61-residue stretch at 8-68 (QKCMACDKTV…RPHFDQNFKR (61 aa)) folds into the LIM zinc-binding 1 domain. Positions 74 to 98 (KSFEGTPKIGKPDRPLEGERPAGTK) are disordered. Positions 83 to 95 (GKPDRPLEGERPA) are enriched in basic and acidic residues. The LIM zinc-binding 2 domain maps to 108 to 168 (EKCVGCDKTV…KHHHIQLIKE (61 aa)).

As to quaternary structure, interacts with F-actin. In terms of tissue distribution, expressed in roots, leaves, stems, flowers and siliques. Not detected in pollen.

It localises to the cytoplasm. Its subcellular location is the cytoskeleton. Binds to actin filaments and promotes cross-linking into thick bundles. Has an actin-stabilizing activity. The actin regulatory activities are not regulated by pH and [Ca(2+)]. The protein is LIM domain-containing protein WLIM1 of Arabidopsis thaliana (Mouse-ear cress).